The sequence spans 1374 residues: Mitogen-activated protein kinase kinase kinase 5 (1374 aa).

The tract at residues proline 68–glycine 87 is disordered. Residues alanine 69 to glycine 81 are compositionally biased toward low complexity. Asymmetric dimethylarginine; by PRMT1 occurs at positions 78 and 80. The residue at position 83 (serine 83) is a Phosphoserine; by PIM1 and PKB/AKT1. The tract at residues methionine 649–threonine 1374 is interaction with PPIA/CYPA. The region spanning asparagine 680 to leucine 938 is the Protein kinase domain. ATP-binding positions include leucine 686 to valine 694 and lysine 709. The residue at position 718 (tyrosine 718) is a Phosphotyrosine. Residue aspartate 803 is the Proton acceptor of the active site. Position 813 is a phosphothreonine; by autocatalysis (threonine 813). Threonine 838 is modified (phosphothreonine; by autocatalysis, MELK and MAP3K6). Phosphothreonine; by autocatalysis is present on threonine 842. Residue serine 958 is modified to Phosphoserine. Residue serine 966 is modified to Phosphoserine; by autocatalysis. Phosphoserine occurs at positions 1029 and 1033. The segment at serine 1182–arginine 1209 is disordered. Acidic residues predominate over residues aspartate 1185–glutamate 1199. A coiled-coil region spans residues leucine 1245–lysine 1285.

This sequence belongs to the protein kinase superfamily. STE Ser/Thr protein kinase family. MAP kinase kinase kinase subfamily. Homodimer when inactive. Binds both upstream activators and downstream substrates in multimolecular complexes. Part of a cytoplasmic complex made of HIPK1, DAB2IP and MAP3K5 in response to TNF. This complex formation promotes MAP3K5-JNK activation and subsequent apoptosis. Interacts with SOCS1 which recognizes phosphorylation of Tyr-718 and induces MAP3K5/ASK1 degradation in endothelial cells. Interacts with the 14-3-3 family proteins such as YWHAB, YWHAE, YWHAQ, YWHAH, YWHAZ and SFN. Interacts with ARRB2, BIRC2, DAB2IP, IGF1R, MAP3K6/ASK2, PGAM5, PIM1, PPP5C, SOCS1, STUB1, TRAF2, TRAF6 and TXN. Interacts with ERN1 in a TRAF2-dependent manner. Interacts with calcineurin subunit PPP3R1. Interacts with PPM1L. Interacts (via N-terminus) with RAF1 and this interaction inhibits the proapoptotic function of MAP3K5. Interacts with DAB2IP (via N-terminus C2 domain); the interaction occurs in a TNF-alpha-dependent manner. Interacts with DUSP13A; may positively regulate apoptosis. Interacts with DAXX. Interacts with RC3H2. Interacts with PPIA/CYPA. Interacts with PRMT1; the interaction results in MAP3K5 methylation by PRMT1 which inhibits MAP3K5 activation. Interacts with TRAF2; the interaction is inhibited by PRMT1. Interacts with TRIM48. In terms of assembly, (Microbial infection) Interacts with HIV-1 Nef; this interaction inhibits MAP3K5 signaling. The cofactor is Mg(2+). Phosphorylated at Thr-838 through autophosphorylation and by MAP3K6/ASK2 which leads to activation. Thr-838 is dephosphorylated by PPP5C. Ser-83 and Ser-1033 are inactivating phosphorylation sites, the former of which is phosphorylated by AKT1. Phosphorylated at Ser-966 which induces association of MAP3K5/ASK1 with the 14-3-3 family proteins and suppresses MAP3K5/ASK1 activity. Calcineurin (CN) dephosphorylates this site. Also dephosphorylated and activated by PGAM5. Phosphorylation at Ser-966 in response to oxidative stress is negatively regulated by PPIA/CYPA. In terms of processing, ubiquitinated. Tumor necrosis factor (TNF) induces TNFR2-dependent ubiquitination, leading to proteasomal degradation. Ubiquitinated by RC3H2 in a TRIM48-dependent manner. Post-translationally, methylation at Arg-78 and Arg-80 by PRMT1 promotes association of MAP3K5 with thioredoxin and negatively regulates MAP3K5 association with TRAF2, inhibiting MAP3K5 activation. Methylation is blocked by ubiquitination of PRMT1 by TRIM48. Abundantly expressed in heart and pancreas.

Its subcellular location is the cytoplasm. It localises to the endoplasmic reticulum. The catalysed reaction is L-seryl-[protein] + ATP = O-phospho-L-seryl-[protein] + ADP + H(+). The enzyme catalyses L-threonyl-[protein] + ATP = O-phospho-L-threonyl-[protein] + ADP + H(+). Activated by various stressors, including oxidative stress, endoplasmic reticulum stress, and calcium overload, as well as by receptor-mediated inflammatory signals, such as the tumor necrosis factor (TNF) and lipopolysaccharide (LPS). Homophilic association of MAP3K5/ASK1 through the C-terminal coiled-coil domains and the heteromeric complex formation of MAP3K5/ASK1 with the reduced form of thioredoxin (TXN), constitutes an inactive form of the kinase. Upon ROS-induced dissociation of TXN from MAP3K5/ASK1, TRAF2 and TRAF6 are reciprocally recruited to MAP3K5/ASK1 and form the active MAP3K5/ASK1 signalosome, in which TRAF2 and TRAF6 appear to facilitate the active configuration of MAP3K5/ASK1. MAP3K5/ASK1 activity is also regulated through several phosphorylation and dephosphorylation events. Thr-838 is an activating phosphorylation site that is autophosphorylated and phosphorylated by MAP3K6/ASK2 and dephosphorylated by PPP5C. Ser-83 and Ser-1033 are inactivating phosphorylation sites, the former of which is phosphorylated by AKT1. Phosphorylation of Ser-966 induces association of MAP3K5/ASK1 with the 14-3-3 family proteins, which suppresses MAP3K5/ASK1 activity. Calcium/calmodulin-activated protein phosphatase calcineurin (PPP3CA) has been shown to directly dephosphorylate this site. SOCS1 binds to ASK1 by recognizing phosphorylation of Tyr-718 and induces MAP3K5/ASK1 degradation in endothelial cells. Also dephosphorylated and activated by PGAM5. Contains an N-terminal autoinhibitory domain. Once activated targeted for proteasomal degradation by RC3H2-mediated ubiquitination. Serine/threonine kinase which acts as an essential component of the MAP kinase signal transduction pathway. Plays an important role in the cascades of cellular responses evoked by changes in the environment. Mediates signaling for determination of cell fate such as differentiation and survival. Plays a crucial role in the apoptosis signal transduction pathway through mitochondria-dependent caspase activation. MAP3K5/ASK1 is required for the innate immune response, which is essential for host defense against a wide range of pathogens. Mediates signal transduction of various stressors like oxidative stress as well as by receptor-mediated inflammatory signals, such as the tumor necrosis factor (TNF) or lipopolysaccharide (LPS). Once activated, acts as an upstream activator of the MKK/JNK signal transduction cascade and the p38 MAPK signal transduction cascade through the phosphorylation and activation of several MAP kinase kinases like MAP2K4/SEK1, MAP2K3/MKK3, MAP2K6/MKK6 and MAP2K7/MKK7. These MAP2Ks in turn activate p38 MAPKs and c-jun N-terminal kinases (JNKs). Both p38 MAPK and JNKs control the transcription factors activator protein-1 (AP-1). In Homo sapiens (Human), this protein is Mitogen-activated protein kinase kinase kinase 5 (MAP3K5).